The following is a 396-amino-acid chain: 1-deoxy-D-xylulose 5-phosphate reductoisomerase (396 aa).

NADPH contacts are provided by T10, G11, S12, I13, G36, K37, N38, and N124. K125 provides a ligand contact to 1-deoxy-D-xylulose 5-phosphate. E126 is a binding site for NADPH. A Mn(2+)-binding site is contributed by D150. 1-deoxy-D-xylulose 5-phosphate is bound by residues S151, E152, S186, and H209. Mn(2+) is bound at residue E152. G215 provides a ligand contact to NADPH. Residues S222, N227, K228, and E231 each contribute to the 1-deoxy-D-xylulose 5-phosphate site. E231 is a Mn(2+) binding site.

This sequence belongs to the DXR family. The cofactor is Mg(2+). Mn(2+) is required as a cofactor.

It catalyses the reaction 2-C-methyl-D-erythritol 4-phosphate + NADP(+) = 1-deoxy-D-xylulose 5-phosphate + NADPH + H(+). It participates in isoprenoid biosynthesis; isopentenyl diphosphate biosynthesis via DXP pathway; isopentenyl diphosphate from 1-deoxy-D-xylulose 5-phosphate: step 1/6. Functionally, catalyzes the NADPH-dependent rearrangement and reduction of 1-deoxy-D-xylulose-5-phosphate (DXP) to 2-C-methyl-D-erythritol 4-phosphate (MEP). The protein is 1-deoxy-D-xylulose 5-phosphate reductoisomerase of Actinobacillus pleuropneumoniae serotype 3 (strain JL03).